The chain runs to 98 residues: Guanine nucleotide-binding protein subunit gamma 1 (98 aa).

Residues 19–98 (GKHRILAELA…GGEGCRCLIL (80 aa)) form the G protein gamma domain. Positions 20–50 (KHRILAELARVEQEVAFLEKELKEVENTDIV) form a coiled coil. Residues 88–94 (NGGEGCR) form a regulates lipidation and cell membrane subcellular localization region. Cys-93 is lipidated: S-palmitoyl cysteine. Cys-95 is subject to Cysteine methyl ester. The S-farnesyl cysteine moiety is linked to residue Cys-95. Positions 96-98 (LIL) are cleaved as a propeptide — removed in mature form.

In terms of assembly, g proteins are composed of 3 units, alpha, beta and gamma. Interacts with the beta subunit GB1. The dimer GB1-GG1 interacts with NDL1, NDL2 and NDL3. Binds to NUDT7. Mostly expressed in seedlings (especially at the hypocotyl/root junction), young cauline leaves, open flowers, and floral stems, and, to a lower extent, in roots (restricted to the stele), rosette leaves (restricted to veins), siliques, and unopened floral buds. Also present in hydathods.

It is found in the cell membrane. It localises to the golgi apparatus membrane. Its subcellular location is the golgi apparatus. The protein resides in the trans-Golgi network membrane. The protein localises to the cytoplasm. Functionally, guanine nucleotide-binding proteins (G proteins) are involved as a modulator or transducer in various transmembrane signaling systems. The beta and gamma chains are required for the GTPase activity, for replacement of GDP by GTP, and for G protein-effector interaction. Involved in the abscisic acid (ABA) and ethylene signaling pathways. Regulates acropetal transport of auxin (IAA) in roots and hypocotyls, and thus modulates root architecture (e.g. lateral root formation). The heterotrimeric G-protein controls defense responses to necrotrophic and vascular fungi probably by modulating cell wall-related genes expression; involved in resistance to fungal pathogens such as Alternaria brassicicola, Plectosphaerella cucumerina and Fusarium oxysporum. The sequence is that of Guanine nucleotide-binding protein subunit gamma 1 (GG1) from Arabidopsis thaliana (Mouse-ear cress).